We begin with the raw amino-acid sequence, 347 residues long: Haptoglobin (347 aa).

The signal sequence occupies residues 1 to 18; that stretch reads MSDLGAVVALLLWGQLFA. Residues 31–88 enclose the Sushi domain; that stretch reads DGCPKPPMIANGYVEHLVRYQCKNYYRLRTEGDGVYTLNNEKQWTNKAVGDKLPECEA. Cystine bridges form between C52–C86 and C90–C207. The serine protease stretch occupies residues 103 to 347; it reads ILGGHLDAKG…DWVQKTIAEN (245 aa). N-linked (GlcNAc...) asparagine glycosylation is found at N125, N148, N152, N182, and N232. 2 disulfide bridges follow: C250-C281 and C292-C322. Residues 259 to 264 form an interaction with CD163 region; it reads VPEKKT.

It belongs to the peptidase S1 family. In terms of assembly, tetramer of two alpha and two beta chains; disulfide-linked. The hemoglobin/haptoglobin complex is composed of a haptoglobin dimer bound to two hemoglobin alpha-beta dimers. Interacts with CD163. Interacts with ERGIC3. In terms of tissue distribution, expressed by the liver and secreted in plasma.

It is found in the secreted. As a result of hemolysis, hemoglobin is found to accumulate in the kidney and is secreted in the urine. Haptoglobin captures, and combines with free plasma hemoglobin to allow hepatic recycling of heme iron and to prevent kidney damage. Haptoglobin also acts as an antioxidant, has antibacterial activity and plays a role in modulating many aspects of the acute phase response. Hemoglobin/haptoglobin complexes are rapidly cleared by the macrophage CD163 scavenger receptor expressed on the surface of liver Kupfer cells through an endocytic lysosomal degradation pathway. This Papio hamadryas (Hamadryas baboon) protein is Haptoglobin (HP).